A 460-amino-acid chain; its full sequence is Argininosuccinate lyase (460 aa).

The protein belongs to the lyase 1 family. Argininosuccinate lyase subfamily.

Its subcellular location is the cytoplasm. It catalyses the reaction 2-(N(omega)-L-arginino)succinate = fumarate + L-arginine. It participates in amino-acid biosynthesis; L-arginine biosynthesis; L-arginine from L-ornithine and carbamoyl phosphate: step 3/3. This Rhodopirellula baltica (strain DSM 10527 / NCIMB 13988 / SH1) protein is Argininosuccinate lyase.